The primary structure comprises 532 residues: Membrane protein insertase YidC (532 aa).

The next 5 helical transmembrane spans lie at 7–27, 336–356, 413–433, 450–470, and 492–512; these read FFIF…QSQM, LTIL…ITFI, GGFL…YMLI, LSSQ…MFFI, and PVIF…YYII.

Belongs to the OXA1/ALB3/YidC family. Type 1 subfamily. As to quaternary structure, interacts with the Sec translocase complex via SecD. Specifically interacts with transmembrane segments of nascent integral membrane proteins during membrane integration.

It is found in the cell membrane. In terms of biological role, required for the insertion and/or proper folding and/or complex formation of integral membrane proteins into the membrane. Involved in integration of membrane proteins that insert both dependently and independently of the Sec translocase complex, as well as at least some lipoproteins. Aids folding of multispanning membrane proteins. In Buchnera aphidicola subsp. Acyrthosiphon pisum (strain APS) (Acyrthosiphon pisum symbiotic bacterium), this protein is Membrane protein insertase YidC.